A 523-amino-acid polypeptide reads, in one-letter code: WD repeat-containing protein YPL247C (523 aa).

Positions 1-64 are disordered; that stretch reads MDPFHNGNKR…TTNGGNSKRN (64 aa). A compositionally biased stretch (polar residues) spans 9 to 40; the sequence is KRSSISFGSSQRQPYNKNNYLSGTNGPSSAAQ. A Phosphoserine modification is found at S47. Low complexity predominate over residues 52–64; sequence SGNTTNGGNSKRN. Residue S65 is modified to Phosphoserine. WD repeat units follow at residues 173-213, 241-281, 285-325, and 392-432; these read DVVY…RQFQ, GTFP…YVKT, AHDS…HSTI, and GHGS…MEIN. The tract at residues 436–472 is disordered; the sequence is SKSPSIHGTSLEDPDGDTEMTDGGAGSGLNEDPLSLN.

Belongs to the WD repeat WDR68 family.

The protein resides in the cytoplasm. The protein localises to the nucleus. This is WD repeat-containing protein YPL247C from Saccharomyces cerevisiae (strain ATCC 204508 / S288c) (Baker's yeast).